The sequence spans 341 residues: S-adenosylmethionine:tRNA ribosyltransferase-isomerase (341 aa).

The protein belongs to the QueA family. In terms of assembly, monomer.

The protein localises to the cytoplasm. It carries out the reaction 7-aminomethyl-7-carbaguanosine(34) in tRNA + S-adenosyl-L-methionine = epoxyqueuosine(34) in tRNA + adenine + L-methionine + 2 H(+). Its pathway is tRNA modification; tRNA-queuosine biosynthesis. Functionally, transfers and isomerizes the ribose moiety from AdoMet to the 7-aminomethyl group of 7-deazaguanine (preQ1-tRNA) to give epoxyqueuosine (oQ-tRNA). The chain is S-adenosylmethionine:tRNA ribosyltransferase-isomerase from Clostridium botulinum (strain ATCC 19397 / Type A).